Consider the following 109-residue polypeptide: ATP synthase subunit c (109 aa).

The next 2 membrane-spanning stretches (helical) occupy residues 42–62 (YIGT…QGFS) and 88–108 (LALA…IIFV).

This sequence belongs to the ATPase C chain family. As to quaternary structure, F-type ATPases have 2 components, F(1) - the catalytic core - and F(0) - the membrane proton channel. F(1) has five subunits: alpha(3), beta(3), gamma(1), delta(1), epsilon(1). F(0) has three main subunits: a(1), b(2) and c(10-14). The alpha and beta chains form an alternating ring which encloses part of the gamma chain. F(1) is attached to F(0) by a central stalk formed by the gamma and epsilon chains, while a peripheral stalk is formed by the delta and b chains.

The protein resides in the cell membrane. In terms of biological role, f(1)F(0) ATP synthase produces ATP from ADP in the presence of a proton or sodium gradient. F-type ATPases consist of two structural domains, F(1) containing the extramembraneous catalytic core and F(0) containing the membrane proton channel, linked together by a central stalk and a peripheral stalk. During catalysis, ATP synthesis in the catalytic domain of F(1) is coupled via a rotary mechanism of the central stalk subunits to proton translocation. Functionally, key component of the F(0) channel; it plays a direct role in translocation across the membrane. A homomeric c-ring of between 10-14 subunits forms the central stalk rotor element with the F(1) delta and epsilon subunits. This Ureaplasma parvum serovar 3 (strain ATCC 27815 / 27 / NCTC 11736) protein is ATP synthase subunit c.